Reading from the N-terminus, the 449-residue chain is Type 3 secretion system ATPase (449 aa).

178-183 contacts ATP; it reads GCGKTT.

This sequence belongs to the ATPase alpha/beta chains family. T3SS ATPase subfamily. In terms of assembly, the core secretion machinery of the T3SS is composed of approximately 20 different proteins, including cytoplasmic components, a base, an export apparatus and a needle. This subunit is part of the cytosolic complex. Forms homododecamers.

The protein resides in the cytoplasm. It catalyses the reaction ATP + H2O + cellular proteinSide 1 = ADP + phosphate + cellular proteinSide 2.. ATPase component of the type III secretion system (T3SS), also called injectisome, which is used to inject bacterial effector proteins into eukaryotic host cells. Acts as a molecular motor to provide the energy that is required for the export of proteins. Required for type III secretion apparatus (T3SA) formation, proper protein secretion, host cell invasion and virulence. May play a critical role in T3SS substrate recognition, disassembly of the effector/chaperone complex and unfolding of the effector in an ATP-dependent manner prior to secretion. This chain is Type 3 secretion system ATPase, found in Pseudomonas syringae pv. syringae.